A 64-amino-acid chain; its full sequence is Large ribosomal subunit protein uL29 (64 aa).

The protein belongs to the universal ribosomal protein uL29 family.

The sequence is that of Large ribosomal subunit protein uL29 from Coprothermobacter proteolyticus (strain ATCC 35245 / DSM 5265 / OCM 4 / BT).